An 819-amino-acid polypeptide reads, in one-letter code: Probable phosphoenolpyruvate synthase (819 aa).

Residue histidine 441 is the Tele-phosphohistidine intermediate of the active site. Substrate is bound by residues arginine 540, arginine 587, glutamate 684, glycine 706, threonine 707, asparagine 708, and aspartate 709. Glutamate 684 serves as a coordination point for Mg(2+). Mg(2+) is bound at residue aspartate 709. The Proton donor role is filled by cysteine 756.

This sequence belongs to the PEP-utilizing enzyme family. Mg(2+) is required as a cofactor.

It carries out the reaction pyruvate + ATP + H2O = phosphoenolpyruvate + AMP + phosphate + 2 H(+). The protein operates within carbohydrate biosynthesis; gluconeogenesis. Its function is as follows. Catalyzes the phosphorylation of pyruvate to phosphoenolpyruvate. This Pyrococcus abyssi (strain GE5 / Orsay) protein is Probable phosphoenolpyruvate synthase (ppsA).